Reading from the N-terminus, the 130-residue chain is MTTKLHAVVDAIGLPLRIKPTPGHYGDCPQASSLLSGLKGVGHVIADAAYDADHLRAFIASNLKATAQIKVNPTRSSVPTIDWRLYKERHQIECFFNKLKRYRRIALRCEKTLTAFMGFVHLACAMIWLR.

This sequence belongs to the transposase 11 family.

Its function is as follows. Involved in the transposition of the insertion sequence. This Brucella ovis (strain ATCC 25840 / 63/290 / NCTC 10512) protein is Putative transposase for insertion sequence element IS6501.